Here is a 642-residue protein sequence, read N- to C-terminus: Cysteine-rich receptor-like protein kinase 27 (642 aa).

The N-terminal stretch at 1-24 is a signal peptide; sequence MASTSIMLSSFFSFFFLTFFVTYA. At 25–274 the chain is on the extracellular side; sequence QQNVTVHTIC…QGKSKDRSKT (250 aa). 7 N-linked (GlcNAc...) asparagine glycosylation sites follow: Asn-27, Asn-40, Asn-44, Asn-70, Asn-145, Asn-173, and Asn-258. 2 Gnk2-homologous domains span residues 29-130 and 136-240; these read TVHT…SRII and PVPF…VYPF. A helical membrane pass occupies residues 275-295; sequence LIFAVVPIVAIILGLVFLFIY. Residues 296 to 642 are Cytoplasmic-facing; sequence LKRRRKKKTL…DVSLTDLSAR (347 aa). The 288-residue stretch at 333–620 folds into the Protein kinase domain; the sequence is FSLTNKIGEG…QLPKPSQPGF (288 aa). Residues 339–347 and Lys-361 each bind ATP; that span reads IGEGGFGVV. At Tyr-406 the chain carries Phosphotyrosine. The Proton acceptor role is filled by Asp-458. Position 462 is a phosphoserine (Ser-462). At Thr-498 the chain carries Phosphothreonine. Phosphotyrosine is present on Tyr-506.

Belongs to the protein kinase superfamily. Ser/Thr protein kinase family. CRK subfamily.

Its subcellular location is the membrane. It catalyses the reaction L-seryl-[protein] + ATP = O-phospho-L-seryl-[protein] + ADP + H(+). It carries out the reaction L-threonyl-[protein] + ATP = O-phospho-L-threonyl-[protein] + ADP + H(+). The protein is Cysteine-rich receptor-like protein kinase 27 (CRK27) of Arabidopsis thaliana (Mouse-ear cress).